Here is a 354-residue protein sequence, read N- to C-terminus: Thiamine thiazole synthase (354 aa).

Substrate is bound by residues A83, 104-105, G112, and V177; that span reads EA. C210 is subject to 2,3-didehydroalanine (Cys). Substrate-binding positions include D212, H227, M305, and 315–317; that span reads RMG.

Belongs to the THI4 family. As to quaternary structure, homooctamer. Fe cation serves as cofactor. Post-translationally, during the catalytic reaction, a sulfide is transferred from Cys-210 to a reaction intermediate, generating a dehydroalanine residue.

The protein localises to the cytoplasm. Its subcellular location is the nucleus. It catalyses the reaction [ADP-thiazole synthase]-L-cysteine + glycine + NAD(+) = [ADP-thiazole synthase]-dehydroalanine + ADP-5-ethyl-4-methylthiazole-2-carboxylate + nicotinamide + 3 H2O + 2 H(+). Functionally, involved in biosynthesis of the thiamine precursor thiazole. Catalyzes the conversion of NAD and glycine to adenosine diphosphate 5-(2-hydroxyethyl)-4-methylthiazole-2-carboxylic acid (ADT), an adenylated thiazole intermediate. The reaction includes an iron-dependent sulfide transfer from a conserved cysteine residue of the protein to a thiazole intermediate. The enzyme can only undergo a single turnover, which suggests it is a suicide enzyme. May have additional roles in adaptation to various stress conditions and in DNA damage tolerance. The sequence is that of Thiamine thiazole synthase from Candida albicans (strain SC5314 / ATCC MYA-2876) (Yeast).